Consider the following 607-residue polypeptide: Glutamine--fructose-6-phosphate aminotransferase [isomerizing] (607 aa).

The active-site Nucleophile; for GATase activity is Cys-2. A Glutamine amidotransferase type-2 domain is found at 2-217 (CGIIGIIGRE…EGDWVVLTRE (216 aa)). 2 SIS domains span residues 283 to 422 (PDFD…VKGQ) and 455 to 597 (VATA…VDQP). Lys-602 acts as the For Fru-6P isomerization activity in catalysis.

In terms of assembly, homodimer.

The protein localises to the cytoplasm. The catalysed reaction is D-fructose 6-phosphate + L-glutamine = D-glucosamine 6-phosphate + L-glutamate. In terms of biological role, catalyzes the first step in hexosamine metabolism, converting fructose-6P into glucosamine-6P using glutamine as a nitrogen source. The sequence is that of Glutamine--fructose-6-phosphate aminotransferase [isomerizing] from Zymomonas mobilis subsp. mobilis (strain ATCC 31821 / ZM4 / CP4).